The chain runs to 263 residues: Norsolorinic acid ketoreductase stcE (263 aa).

The NADP(+) site is built by Leu29, Asp76, Asn105, Tyr177, Lys181, Ile208, and Ser210. Tyr177 acts as the Proton donor in catalysis. Lys181 acts as the Lowers pKa of active site Tyr in catalysis.

The protein belongs to the short-chain dehydrogenases/reductases (SDR) family.

The enzyme catalyses (1'S)-averantin + NADP(+) = norsolorinic acid + NADPH + H(+). It functions in the pathway mycotoxin biosynthesis; sterigmatocystin biosynthesis. Functionally, short chain dehydrogenase; part of the gene cluster that mediates the biosynthesis of sterigmatocystin (ST), a polyketide-derived furanocoumarin which is part of the most toxic and carcinogenic compounds among the known mycotoxins. The first step in the biosynthesis of sterigmatocystin is the production of hexanoate by the fatty acid synthase (FAS) units stcJ and stcK. The polyketide backbone is assembled by the non-reducing polyketide synthase stcA by condensation of the starter hexanoyl-CoA and 7 malonyl-CoA extender units followed by cyclization and release of norsolorinic acid. Norsolorinic acid is the first stable intermediate in the biosynthesis of sterigmatocystin and is converted into averantin (AVN) by the ketoreductase stcE which reduces the hexanoate ketone to an alcohol. Averantin is then oxidized into 5'-hydroxyaverantin (HAVN) by the cytochrome P450 monooxygenase stcF. 5'-hydroxyaverantin is further converted to 5'-oxyaverantin (OAVN) by the 5'-hydroxyaverantin dehydrogenase stcG. The next step is the conversion of OAVN into averufin (AVF) which is catalyzed by a yet to be identified enzyme. The cytochrome P450 monooxygenase stcB and the flavin-binding monooxygenase stcW are both required for the conversion of averufin to 1-hydroxyversicolorone. The esterase stcI probably catalyzes the formation of versiconal hemiacetal acetate from 1-hydroxyversicolorone. The oxydoreductase stcN then probably catalyzes the biosynthetic step from versiconal to versicolorin B (VERB). The next step is performed by the versicolorin B desaturase stcL to produce versicolorin A (VERA). The ketoreductase stcU and the cytochrome P450 monooxygenase stcS are involved in the conversion of versicolorin A to demethylsterigmatocystin. The Baeyer-Villiger oxidas stcQ and the reductase stcR might be involved in the biosynthetic step from versicolorin A to demethylsterigmatocystin. The final step in the biosynthesis of sterigmatocystin is the methylation of demethylsterigmatocystin catalyzed by the methyltransferase stcP. In Emericella nidulans (strain FGSC A4 / ATCC 38163 / CBS 112.46 / NRRL 194 / M139) (Aspergillus nidulans), this protein is Norsolorinic acid ketoreductase stcE.